The sequence spans 172 residues: Shikimate kinase (172 aa).

14–19 (GAGKST) contacts ATP. Residue Ser18 participates in Mg(2+) binding. Asp36, Arg60, and Gly82 together coordinate substrate. Arg120 contributes to the ATP binding site. Position 140 (Arg140) interacts with substrate.

This sequence belongs to the shikimate kinase family. In terms of assembly, monomer. Mg(2+) is required as a cofactor.

It localises to the cytoplasm. It catalyses the reaction shikimate + ATP = 3-phosphoshikimate + ADP + H(+). The protein operates within metabolic intermediate biosynthesis; chorismate biosynthesis; chorismate from D-erythrose 4-phosphate and phosphoenolpyruvate: step 5/7. Its function is as follows. Catalyzes the specific phosphorylation of the 3-hydroxyl group of shikimic acid using ATP as a cosubstrate. This Tolumonas auensis (strain DSM 9187 / NBRC 110442 / TA 4) protein is Shikimate kinase.